The sequence spans 282 residues: Transformer-2 protein homolog alpha (282 aa).

The segment at 1-118 (MSDVEENNFE…TGSRANPDPN (118 aa)) is disordered. Ser-2 is subject to N-acetylserine. Phosphoserine is present on residues Ser-2 and Ser-14. Thr-24 carries the post-translational modification Phosphothreonine. The span at 51 to 84 (RSRSKSRSRSRRHSHRRYTRSRSHSHSHRRRSRS) shows a compositional bias: basic residues. Phosphoserine occurs at positions 82, 84, and 86. Residue Thr-88 is modified to Phosphothreonine. A compositionally biased stretch (basic residues) spans 92–110 (RRRRSRSHSPMSNRRRHTG). Residues Ser-96 and Ser-98 each carry the phosphoserine modification. Positions 119 to 197 (TCLGVFGLSL…RRIRVDYSIT (79 aa)) constitute an RRM domain. Residue Lys-198 forms a Glycyl lysine isopeptide (Lys-Gly) (interchain with G-Cter in SUMO2) linkage. Residues 198–225 (KRAHTPTPGIYMGRPTHSGGGGGGGGGG) are linker. Disordered regions lie at residues 201–245 (HTPT…YDRG) and 260–282 (SPSP…PRRY). Phosphothreonine is present on residues Thr-202 and Thr-204. Residues 215 to 230 (SGGGGGGGGGGGGGGG) show a composition bias toward gly residues. Omega-N-methylarginine is present on Arg-232. A compositionally biased stretch (basic and acidic residues) spans 232–245 (RRRDSYYDRGYDRG). Ser-236 is modified (phosphoserine). Over residues 268 to 282 (YRSRSRSRSYSPRRY) the composition is skewed to basic residues.

The protein belongs to the splicing factor SR family. Binds to A3 enhancer proteins SRp75, SRp55, SRp40 and SRp30. Interacts with ILDR1 (via C-terminus) and ILDR2. Phosphorylated in the RS domains.

The protein localises to the nucleus. Sequence-specific RNA-binding protein which participates in the control of pre-mRNA splicing. The polypeptide is Transformer-2 protein homolog alpha (Homo sapiens (Human)).